We begin with the raw amino-acid sequence, 146 residues long: NADH-ubiquinone oxidoreductase chain 6 (146 aa).

Helical transmembrane passes span 10–30 (LTAI…ILFV), 41–61 (FVLM…MLFL), 75–95 (GTIT…LDIT), and 124–144 (AMLL…AMSI).

The protein belongs to the complex I subunit 6 family.

Its subcellular location is the mitochondrion membrane. It carries out the reaction a ubiquinone + NADH + 5 H(+)(in) = a ubiquinol + NAD(+) + 4 H(+)(out). Its function is as follows. Core subunit of the mitochondrial membrane respiratory chain NADH dehydrogenase (Complex I) that is believed to belong to the minimal assembly required for catalysis. Complex I functions in the transfer of electrons from NADH to the respiratory chain. The immediate electron acceptor for the enzyme is believed to be ubiquinone. This chain is NADH-ubiquinone oxidoreductase chain 6 (ND6), found in Debaryomyces hansenii (strain ATCC 36239 / CBS 767 / BCRC 21394 / JCM 1990 / NBRC 0083 / IGC 2968) (Yeast).